The following is a 203-amino-acid chain: Urease accessory protein UreG (203 aa).

Residue 14–21 coordinates GTP; the sequence is GPVGSGKT.

This sequence belongs to the SIMIBI class G3E GTPase family. UreG subfamily. In terms of assembly, homodimer. UreD, UreF and UreG form a complex that acts as a GTP-hydrolysis-dependent molecular chaperone, activating the urease apoprotein by helping to assemble the nickel containing metallocenter of UreC. The UreE protein probably delivers the nickel.

The protein resides in the cytoplasm. Its function is as follows. Facilitates the functional incorporation of the urease nickel metallocenter. This process requires GTP hydrolysis, probably effectuated by UreG. In Rhizobium etli (strain ATCC 51251 / DSM 11541 / JCM 21823 / NBRC 15573 / CFN 42), this protein is Urease accessory protein UreG.